A 419-amino-acid chain; its full sequence is Carboxypeptidase A1 (419 aa).

Positions 1 to 16 (MQGLLILSVLLGAALG) are cleaved as a signal peptide. Residues 17–110 (KEDFVGHQVL…QEQMFASQSR (94 aa)) constitute a propeptide, activation peptide. The 294-residue stretch at 121 to 414 (TYHTLDEIYD…LGVLTIMEHT (294 aa)) folds into the Peptidase M14 domain. The Zn(2+) site is built by H179 and E182. Residues 179 to 182 (HSRE), R237, and 254 to 255 (NR) contribute to the substrate site. Residues C248 and C271 are joined by a disulfide bond. H306 provides a ligand contact to Zn(2+). Residues 307–308 (SY) and Y358 contribute to the substrate site. The active-site Proton donor/acceptor is the E380.

Belongs to the peptidase M14 family. In terms of assembly, monomer. May form a complex with proelastase 2. Requires Zn(2+) as cofactor. As to expression, pancreas.

The protein resides in the secreted. The enzyme catalyses Release of a C-terminal amino acid, but little or no action with -Asp, -Glu, -Arg, -Lys or -Pro.. It carries out the reaction leukotriene C4 + H2O = leukotriene F4 + glycine. Its activity is regulated as follows. Inhibited by interaction with the S.magnifica carboxypeptidase inhibitor SmCI. Its function is as follows. Carboxypeptidase that catalyzes the release of a C-terminal amino acid, but has little or no action with -Asp, -Glu, -Arg, -Lys or -Pro. Catalyzes the conversion of leukotriene C4 to leukotriene F4 via the hydrolysis of an amide bond. The protein is Carboxypeptidase A1 (CPA1) of Bos taurus (Bovine).